A 932-amino-acid chain; its full sequence is Receptor-like protein 9a (932 aa).

The N-terminal stretch at 1 to 28 (MLIFTIPQFFFAAWVMVVSLQMQGYISC) is a signal peptide. Over 29 to 888 (IEKERKGLLE…DDETAIDMET (860 aa)) the chain is Extracellular. Asn-53, Asn-80, and Asn-90 each carry an N-linked (GlcNAc...) asparagine glycan. 28 LRR repeats span residues 97-122 (FEELRTLNLYDFGCTGWFDDIHGYKS), 126-152 (LKKLEILDMGNNEVNNSVLPFLNAASS), 154-174 (RTLILHGNNMEGTFPMKELKD), 175-200 (LSNLELLDLSGNLLNGPVPGLAVLHK), 202-222 (HALDLSDNTFSGSLGREGLCQ), 223-246 (LKNLQELDLSQNEFTGPFPQCFSS), 247-273 (LTQLQVLDMSSNQFNGTLPSVISNLDS), 275-295 (EYLSLSDNKFEGFFSFDLIAN), 296-320 (LSKLKVFKLSSKSSLLHIESEISLQ), 322-345 (KFRLSVIDLKYCNLEAVPSFLQQQ), 346-368 (KDLRLINLSNNKLTGISPSWFLE), 370-393 (YPKLRVLLLWNNSFTIFHLPRLLV), 394-417 (HSLHVLDLSVNKFDEWLPNNIGHV), 418-441 (LPNISHLNLSNNGFQGNLPSSFSE), 443-466 (KKIFFLDLSHNNLSGSLPKKFCIG), 468-491 (SSLSILKLSYNRFSGKIFPQPMKL), 492-514 (ESLRVLIADNNQFTEITDVLIHS), 516-535 (GLVFLELSNNSLQGVIPSWF), 536-560 (GGFYFLYLSVSDNLLNGTIPSTLFN), 561-583 (VSFQLLDLSRNKFSGNLPSHFSF), 585-605 (HMGLLYLHDNEFSGPVPSTLL), 606-629 (ENVMLLDLRNNKLSGTIPRFVSNR), 631-652 (FLYLLLRGNALTGHIPTSLCEL), 653-676 (KSIRVLDLANNRLNGSIPPCLNNV), 745-769 (FKFMFGLDFSSNELIGEIPRELGDF), 770-792 (QRIRALNLSHNSLSGLVPESFSN), 794-817 (TDIESIDLSFNVLHGPIPHDLTKL), and 819-842 (YIVVFNVSYNNLSGLIPSQGKFLS). An N-linked (GlcNAc...) asparagine glycan is attached at Asn-140. Residues Asn-261 and Asn-295 are each glycosylated (N-linked (GlcNAc...) asparagine). N-linked (GlcNAc...) asparagine glycans are attached at residues Asn-352 and Asn-380. 3 N-linked (GlcNAc...) asparagine glycosylation sites follow: Asn-420, Asn-425, and Asn-454. N-linked (GlcNAc...) asparagine glycans are attached at residues Asn-524, Asn-551, and Asn-560. 2 N-linked (GlcNAc...) asparagine glycosylation sites follow: Asn-666 and Asn-675. Asn-776 and Asn-792 each carry an N-linked (GlcNAc...) asparagine glycan. N-linked (GlcNAc...) asparagine glycans are attached at residues Asn-824, Asn-829, Asn-860, and Asn-866. The helical transmembrane segment at 889 to 909 (FYWSLFATYGITWMAFIVFLC) threads the bilayer. Residues 910–932 (FDSPWRQAWFRLVNVFVSFLKCV) are Cytoplasmic-facing.

It belongs to the RLP family.

The protein localises to the cell membrane. This is Receptor-like protein 9a from Arabidopsis thaliana (Mouse-ear cress).